Reading from the N-terminus, the 157-residue chain is S-ribosylhomocysteine lyase (157 aa).

Fe cation-binding residues include H54, H58, and C124.

The protein belongs to the LuxS family. Homodimer. It depends on Fe cation as a cofactor.

It carries out the reaction S-(5-deoxy-D-ribos-5-yl)-L-homocysteine = (S)-4,5-dihydroxypentane-2,3-dione + L-homocysteine. Its function is as follows. Involved in the synthesis of autoinducer 2 (AI-2) which is secreted by bacteria and is used to communicate both the cell density and the metabolic potential of the environment. The regulation of gene expression in response to changes in cell density is called quorum sensing. Catalyzes the transformation of S-ribosylhomocysteine (RHC) to homocysteine (HC) and 4,5-dihydroxy-2,3-pentadione (DPD). The polypeptide is S-ribosylhomocysteine lyase (Lactobacillus acidophilus (strain ATCC 700396 / NCK56 / N2 / NCFM)).